Consider the following 1614-residue polypeptide: MLKCIPLWRCNRHVESVDKRHCSLQAVPEEIYRYSRSLEELLLDANQLRELPKPFFRLLNLRKLGLSDNEIQRLPPEVANFMQLVELDVSRNDIPEIPESIKFCKALEIADFSGNPLSRLPEGFTQLRSLAHLALNDVSLQALPGDVGNLANLVTLELRENLLKSLPSSLSFLVKLEQLDLGGNELEVLPDTLGALPNLRELWLDRNQLSALPPELGNLRRLVCLDVSENRLEELPAELGGLLLLTDLLLSQNLLQRLPDGIGQLKQLSILKVDQNRLCEVTEAIGDCENLSELILTENLLTALPRSLGKLTKLTNLNADRNRLEVLPPEIGGCAALSVLSLRDNRLATLPAELAHTAELHVLDVAGNRLQSLPFALTHLNLKALWLAENQAQPMLRFQTEDDAQTGEKVLTCYLLPQQPPPSLEESGLQSSPSESWSDAPPSRVSVIQFLEVPMCSDDAEGAAAEKRGLQRRATPHPSELKVMKRGVEERRGEAYSWKPESRLPSPLEEDKRLSTESGLSEDSQPSTGTASQGEPEGSLADTQGLSQQEAAPNAQEEAVEEETYEEPTVRFAEDTLLLPPAGEDGESEEGQLEAPWPLPGGRQRLIRKDTPHYKKHFKISKLPQPEAVVALLQGAQPDGEGPAGAGGWHNGPHTPWAPRAEEEDEEDEEEDEEEEEVAVAEEDKEEAVVSAPSIKGVSFDQANNLLIEPARIEEEELTLTIVRQTGGLGISIAGGKGSTPYKGDDEGIFISRVSEEGPAAQAGVRVGDKLLEVNGVALHGAEHHQAVEALRGAGTTVQMRLWRERMVEPENAVTVTPLRPEDDYSPRERRGAGLRLPLLQPEAAGPLRQRHVACLVRSEKGLGFSIAGGKGSTPYRAGDGGIFISRIAEGGAAHRAGTLQVGDRVLSINGVDMTEARHDHAVSLLTAASPTIALLLEREAGGPLPPSPLPHSPPPPVTAPSTVVTASPGESGPLRLAPSLLAATLEGPYPVEEICLPRAGGPLGLSIVGGSDHSSHPFGIQEPGVFISKVLPRGLAARSGLRVGDRILAVNGQDIREATHQEAVSALLRPCLELVLLVRRDPPPPGMRELCIQKAPGEKLGISVRGGAKGHAGNPCDPTDEGIFISKVSPTGAAGRDGRLRVGLRLLEVNQQSLLGLTHGEAVQLLRSVGDTLTVLVCDGFDTSTVAPAEVSPGVIANPFAAGVGRRNSLESVSSIDRELSPEGCGKEKEPPGPTPQWGLEAMVPPGTTGGKMAEGPHSSSCQQPPSPPSPDTLPTNVKQAYRTFAAVPGPHPLQDTPAQPPTPGPMASPEQLSFRERQKYFELEVRMPQAEGPPKRVSLVGADDLRKMQEEEARKLQQKRAQLMREAEDGALSLDLDGEAPDDEEPEEPPPWAGPAAGLSPSSPQPLGGGAPVRTAKAERRHQERLRVQSPELSTPLPDRALSPAERRALEAEKRALWRAARMKSLEQDALRAQMVLSKSQEGRSRRGPLERLAEAPSPAPTPSPTPVEDLGLQTSTSPGRLALSGRKFDYRVFAALPSSRPVCELQSPDFAEELRSLEPSPSPGLQEEDGEVAMVLLGRPSPGTVGPEEVTLCSSRRPVRPGRRGLGPVPS.

Residues 1–809 form a sufficient for targeting to adherens junction and to inhibit cell proliferation region; that stretch reads MLKCIPLWRC…MRLWRERMVE (809 aa). 17 LRR repeats span residues 11–34, 35–58, 59–81, 83–105, 107–127, 128–150, 151–173, 174–196, 197–219, 221–242, 243–265, 267–288, 289–311, 312–334, 336–357, 359–380, and 382–405; these read NRHV…IYRY, SRSL…FFRL, LNLR…VANF, QLVE…KFCK, LEIA…FTQL, RSLA…VGNL, ANLV…LSFL, VKLE…LGAL, PNLR…LGNL, RLVC…LGGL, LLLT…IGQL, QLSI…IGDC, ENLS…LGKL, TKLT…IGGC, ALSV…LAHT, ELHV…LTHL, and LKAL…DDAQ. Phosphoserine is present on Ser-37. Thr-378 bears the Phosphothreonine mark. Disordered regions lie at residues 417–441, 462–608, and 636–692; these read PQQP…SDAP, GAAA…RLIR, and AQPD…VVSA. Positions 428–437 are enriched in polar residues; the sequence is GLQSSPSESW. A Phosphothreonine modification is found at Thr-475. Basic and acidic residues predominate over residues 479-494; sequence SELKVMKRGVEERRGE. A compositionally biased stretch (polar residues) spans 516 to 533; sequence TESGLSEDSQPSTGTASQ. Residues 548-557 are compositionally biased toward low complexity; it reads QQEAAPNAQE. Residues 662 to 686 show a composition bias toward acidic residues; sequence EEEDEEDEEEDEEEEEVAVAEEDKE. The stretch at 664 to 691 forms a coiled coil; the sequence is EDEEDEEEDEEEEEVAVAEEDKEEAVVS. Phosphoserine is present on residues Ser-699 and Ser-755. Residues 708 to 1219 form an interaction with ARHGEF7 region; sequence IEPARIEEEE…SLESVSSIDR (512 aa). Residues 719–806 form the PDZ 1 domain; sequence TLTIVRQTGG…TVQMRLWRER (88 aa). The interval 719 to 1184 is required for interaction with VIM; sequence TLTIVRQTGG…TVLVCDGFDT (466 aa). Residue Thr-817 is modified to Phosphothreonine. Phosphoserine occurs at positions 826, 866, and 930. Positions 853 to 941 constitute a PDZ 2 domain; the sequence is VACLVRSEKG…TIALLLEREA (89 aa). Positions 940–971 are disordered; sequence EAGGPLPPSPLPHSPPPPVTAPSTVVTASPGE. A compositionally biased stretch (pro residues) spans 944-959; the sequence is PLPPSPLPHSPPPPVT. Residues 960–969 show a composition bias toward low complexity; sequence APSTVVTASP. PDZ domains lie at 994 to 1083 and 1090 to 1178; these read EICL…RRDP and ELCI…TVLV. Phosphoserine occurs at positions 1130, 1210, 1213, 1216, 1222, 1260, 1268, and 1271. Residues 1214–1448 form a disordered region; sequence VSSIDRELSP…LPDRALSPAE (235 aa). The span at 1217–1232 shows a compositional bias: basic and acidic residues; it reads IDRELSPEGCGKEKEP. Phosphothreonine is present on Thr-1304. Phosphoserine is present on Ser-1310. Residues 1315 to 1327 are compositionally biased toward basic and acidic residues; that stretch reads SFRERQKYFELEV. A Phosphoserine modification is found at Ser-1340. The stretch at 1341–1368 forms a coiled coil; that stretch reads LVGADDLRKMQEEEARKLQQKRAQLMRE. The span at 1345-1357 shows a compositional bias: basic and acidic residues; it reads DDLRKMQEEEARK. The segment covering 1378–1390 has biased composition (acidic residues); the sequence is LDGEAPDDEEPEE. Low complexity predominate over residues 1396-1408; that stretch reads GPAAGLSPSSPQP. Phosphoserine occurs at positions 1402 and 1405. Residues 1418–1429 show a composition bias toward basic and acidic residues; sequence AKAERRHQERLR. 3 positions are modified to phosphoserine: Ser-1432, Ser-1445, and Ser-1467. The segment at 1476–1524 is disordered; it reads QMVLSKSQEGRSRRGPLERLAEAPSPAPTPSPTPVEDLGLQTSTSPGRL. Basic and acidic residues predominate over residues 1483 to 1496; it reads QEGRSRRGPLERLA. Ser-1500 is subject to Phosphoserine. At Thr-1504 the chain carries Phosphothreonine. 3 positions are modified to phosphoserine: Ser-1506, Ser-1520, and Ser-1550. The disordered stretch occupies residues 1581–1614; it reads GRPSPGTVGPEEVTLCSSRRPVRPGRRGLGPVPS.

It belongs to the LAP (LRR and PDZ) protein family. As to quaternary structure, interacts with UBE3A. Interacts with PAK1 and PAK2. Interacts (via PDZ domains) with VANGL2. Interacts (via PDZ domains) with LPP and TRIP6; the interaction is direct. Interacts (via PDZ domains) with TJP2. Interacts (via PDZ domains) with APC; may mediate APC targeting to adherens junctions of epithelial cells. Interacts (via PDZ domains) with TSHR; regulates TSHR trafficking and function. Interacts with ARHGEF7 and GIT1; interacts directly with ARHGEF7. Interacts with CTNNB1. Interacts with MAPK12. Interacts (via PDZ domains 1 and 3) with MCC. Interacts with DLG5. Interacts with STK4/MST1 and LATS1 in the presence of DLG5. Interacts (via PDZ domain 3) with CRTAM (via PDZ-binding motif); the interaction promotes CRTAM and SCRIB polarization in a subset of CD4+ T-cells. Interacts with YES1, when YES1 is in a closed conformation; the interaction facilitates YES1 autophosphorylation. Interacts (via PDZ domains) with VIM; the interaction protects SCRIB from proteasomal degradation and facilitates SCRIB localization to intermediate filaments, the interaction is reduced by cell contact inhibition. In terms of processing, ubiquitinated; targeted for UBE3A-dependent multiubiquitination and degraded. Palmitoylated. Could be depalmitoylated by LYPLA1 and/or LYPLA2. Palmitoylation of SCRIB by ZDHHC7 is required for its localization to cell-cell junctions, function in the establishement of epithelial cell polarity and the regulation of downstream signaling pathways important for epithelial cell differentiation.

It localises to the cell membrane. The protein localises to the cell junction. Its subcellular location is the adherens junction. The protein resides in the cell projection. It is found in the lamellipodium. It localises to the cytoplasm. The protein localises to the postsynapse. Its subcellular location is the presynapse. Its function is as follows. Scaffold protein involved in different aspects of polarized cell differentiation regulating epithelial and neuronal morphogenesis and T-cell polarization. Via its interaction with CRTAM, required for the late phase polarization of a subset of CD4+ T-cells, which in turn regulates TCR-mediated proliferation and IFNG and IL22 production. Plays a role in cell directional movement, cell orientation, cell sheet organization and Golgi complex polarization at the cell migration front. Promotes epithelial cell layer barrier function via maintaining cell-cell adhesion. Most probably functions in the establishment of apico-basal cell polarity. May function in cell proliferation regulating progression from G1 to S phase and as a positive regulator of apoptosis for instance during acinar morphogenesis of the mammary epithelium. May regulate cell invasion via MAPK-mediated cell migration and adhesion. May play a role in exocytosis and in the targeting of synaptic vesicles to synapses. Functions as an activator of Rac GTPase activity. The protein is Protein scribble homolog of Canis lupus familiaris (Dog).